The sequence spans 435 residues: 26S proteasome regulatory subunit 7 (435 aa).

Residues 1–23 (MPDHLGDDMRKTKKDDTKEEEKN) are compositionally biased toward basic and acidic residues. The disordered stretch occupies residues 1–24 (MPDHLGDDMRKTKKDDTKEEEKNF). Position 218-225 (218-225 (GPPGTGKT)) interacts with ATP.

This sequence belongs to the AAA ATPase family.

The protein localises to the cytoplasm. Its subcellular location is the nucleus. In terms of biological role, the 26S proteasome is involved in the ATP-dependent degradation of ubiquitinated proteins. The regulatory (or ATPase) complex confers ATP dependency and substrate specificity to the 26S complex. This chain is 26S proteasome regulatory subunit 7 (rpt-1), found in Caenorhabditis elegans.